The following is a 395-amino-acid chain: MRNKGDFLFTSESVSEGHPDKVADRISDTVLDAYLAADGESRVACETLVTTNRVVLAGEVRGPSSVTPEALIEGARAAIRDIGYDQAGFSWKNAQIESYLHAQSADIAVGVDSAGEKDEGAGDQGIMFGFATRETETLMPAPLFYAHGILHRIRDLRKAGDARVAMLQPDAKSQVTLRYVDGRPVGATSVVISTQHDEGASQAAIREALRDVVQDVLPEGWMCPEDEFYANPTGVFVIGGPDGDCGLTGRKIIVDTYGGAAPHGGGAFSGKDPTKVDRSAAYACRYLAKNVVAAGLADRCTLQISYAIGVSHPLSVYVDLDGTGKDVDEAKLGSVLREVMNLTPRGIRQHLRLNRPIYTETSAYGHFGRTPDEARDNFTWEKTDLVDALRGAFNR.

His18 is an ATP binding site. Asp20 lines the Mg(2+) pocket. Glu46 contributes to the K(+) binding site. Positions 59 and 103 each coordinate L-methionine. The segment at 103-113 (QSADIAVGVDS) is flexible loop. ATP-binding positions include 170-172 (DAK), Asp244, 250-251 (RK), Ala267, and Lys271. Asp244 contacts L-methionine. Lys275 lines the L-methionine pocket.

The protein belongs to the AdoMet synthase family. As to quaternary structure, homotetramer; dimer of dimers. Mg(2+) is required as a cofactor. The cofactor is K(+).

It is found in the cytoplasm. The enzyme catalyses L-methionine + ATP + H2O = S-adenosyl-L-methionine + phosphate + diphosphate. Its pathway is amino-acid biosynthesis; S-adenosyl-L-methionine biosynthesis; S-adenosyl-L-methionine from L-methionine: step 1/1. Catalyzes the formation of S-adenosylmethionine (AdoMet) from methionine and ATP. The overall synthetic reaction is composed of two sequential steps, AdoMet formation and the subsequent tripolyphosphate hydrolysis which occurs prior to release of AdoMet from the enzyme. The polypeptide is S-adenosylmethionine synthase (Gluconacetobacter diazotrophicus (strain ATCC 49037 / DSM 5601 / CCUG 37298 / CIP 103539 / LMG 7603 / PAl5)).